The primary structure comprises 60 residues: Metallothionein A (60 aa).

Residues 1–28 (MDPCECSKSGTCNCGGSCTCTNCSCKSC) are beta. The a divalent metal cation site is built by Cys4, Cys6, Cys12, Cys14, Cys18, Cys20, Cys23, Cys25, Cys28, Cys32, Cys33, Cys35, Cys36, Cys40, Cys43, Cys47, Cys49, Cys54, Cys58, and Cys59. Residues 29–60 (KKSCCPCCPSGCTKCASGCVCKGKTCDTSCCQ) are alpha.

This sequence belongs to the metallothionein superfamily. Type 1 family.

In terms of biological role, metallothioneins have a high content of cysteine residues that bind various heavy metals. The sequence is that of Metallothionein A (mta) from Chionodraco rastrospinosus (Ocellated icefish).